A 635-amino-acid chain; its full sequence is 1-deoxy-D-xylulose-5-phosphate synthase (635 aa).

Residues histidine 77 and 118 to 120 each bind thiamine diphosphate; that span reads GHA. Aspartate 149 contributes to the Mg(2+) binding site. Residues 150–151, asparagine 178, phenylalanine 290, and glutamate 375 each bind thiamine diphosphate; that span reads GS. Asparagine 178 provides a ligand contact to Mg(2+).

This sequence belongs to the transketolase family. DXPS subfamily. As to quaternary structure, homodimer. The cofactor is Mg(2+). Thiamine diphosphate is required as a cofactor.

It catalyses the reaction D-glyceraldehyde 3-phosphate + pyruvate + H(+) = 1-deoxy-D-xylulose 5-phosphate + CO2. It functions in the pathway metabolic intermediate biosynthesis; 1-deoxy-D-xylulose 5-phosphate biosynthesis; 1-deoxy-D-xylulose 5-phosphate from D-glyceraldehyde 3-phosphate and pyruvate: step 1/1. Catalyzes the acyloin condensation reaction between C atoms 2 and 3 of pyruvate and glyceraldehyde 3-phosphate to yield 1-deoxy-D-xylulose-5-phosphate (DXP). This chain is 1-deoxy-D-xylulose-5-phosphate synthase, found in Chlorobium phaeovibrioides (strain DSM 265 / 1930) (Prosthecochloris vibrioformis (strain DSM 265)).